Consider the following 88-residue polypeptide: Small ribosomal subunit protein uS15c (88 aa).

The protein belongs to the universal ribosomal protein uS15 family. As to quaternary structure, part of the 30S ribosomal subunit.

The protein resides in the plastid. It localises to the chloroplast. This chain is Small ribosomal subunit protein uS15c (rps15), found in Capsella bursa-pastoris (Shepherd's purse).